The following is a 178-amino-acid chain: Extracellular fatty acid-binding protein (178 aa).

A signal peptide spans 1–20; the sequence is MRTLALSLGLALLCLLHAKA. Enterobactin is bound at residue Thr-43. Positions 72 and 104 each coordinate 1-tetradecanoyl-sn-glycerol 3-phosphate. Cys-80 and Cys-173 form a disulfide bridge. Enterobactin contacts are provided by Lys-104, Arg-123, and Arg-134. A 1-tetradecanoyl-sn-glycerol 3-phosphate-binding site is contributed by 134–136; it reads RLY.

This sequence belongs to the calycin superfamily. Lipocalin family. In terms of assembly, monomer.

The protein resides in the secreted. Siderocalin-like lipocalin tightly binding a variety of bacterial ferric siderophores, also binds long-chain unsaturated fatty acids such as linoleic acid, oleic acid, arachidonic acid and, with a lower affinity, long chain saturated fatty acids such as steraic acid. May act as an antibacterial factor, through dual ligand specificity, both as a siderophore-sequestrating molecule and a lysophosphatidic acid (LPA) sensor. In Coturnix japonica (Japanese quail), this protein is Extracellular fatty acid-binding protein.